The sequence spans 320 residues: Cytochrome f (320 aa).

The first 35 residues, methionine 1–alanine 35, serve as a signal peptide directing secretion. The heme site is built by tyrosine 36, cysteine 56, cysteine 59, and histidine 60. The helical transmembrane segment at valine 286–leucine 305 threads the bilayer.

It belongs to the cytochrome f family. As to quaternary structure, the 4 large subunits of the cytochrome b6-f complex are cytochrome b6, subunit IV (17 kDa polypeptide, petD), cytochrome f and the Rieske protein, while the 4 small subunits are PetG, PetL, PetM and PetN. The complex functions as a dimer. The cofactor is heme.

The protein localises to the plastid. It is found in the chloroplast thylakoid membrane. Component of the cytochrome b6-f complex, which mediates electron transfer between photosystem II (PSII) and photosystem I (PSI), cyclic electron flow around PSI, and state transitions. This is Cytochrome f (petA) from Glycine max (Soybean).